The following is a 150-amino-acid chain: UPF0178 protein HCH_06960 (150 aa).

This sequence belongs to the UPF0178 family.

The polypeptide is UPF0178 protein HCH_06960 (Hahella chejuensis (strain KCTC 2396)).